A 331-amino-acid chain; its full sequence is Protein Brevis radix-like 1 (331 aa).

The interval 1–111 (MFTCINCTKM…HQSGRPDSRF (111 aa)) is disordered. Composition is skewed to polar residues over residues 25-41 (STTP…TTQI) and 48-66 (FSGS…SSNL). One can recognise a BRX 1 domain in the interval 137-192 (KEWMAQVEPGVHITFVSLPSGGNDLKRIRFSREVFDKWQAQRWWGENYDRIVELYN). Disordered stretches follow at residues 201–246 (LQTP…VPHH) and 258–279 (TTSS…GEWV). Over residues 221–235 (DSARESRDWTQRDNN) the composition is skewed to basic and acidic residues. Residues 276-331 (GEWVEEDEPGVYITIRQLPDGTRELRRVRFSRERFGEVHAKTWWEQNRDRIQTQYL) enclose the BRX 2 domain.

Belongs to the BRX family. As to quaternary structure, heterodimer with BRXL1. Expressed in roots.

The protein localises to the nucleus. Its function is as follows. May act as a regulator of cell proliferation and elongation in the root. The chain is Protein Brevis radix-like 1 (BRXL1) from Arabidopsis thaliana (Mouse-ear cress).